The sequence spans 332 residues: 2,3-diketo-L-gulonate reductase (332 aa).

Histidine 44 (proton donor) is an active-site residue. NAD(+)-binding positions include isoleucine 168–serine 174, tryptophan 224–lysine 225, and glycine 304–glutamate 306.

The protein belongs to the LDH2/MDH2 oxidoreductase family. DlgD subfamily. Homodimer.

Its subcellular location is the cytoplasm. The catalysed reaction is 3-dehydro-L-gulonate + NAD(+) = 2,3-dioxo-L-gulonate + NADH + H(+). The enzyme catalyses 3-dehydro-L-gulonate + NADP(+) = 2,3-dioxo-L-gulonate + NADPH + H(+). In terms of biological role, catalyzes the reduction of 2,3-diketo-L-gulonate in the presence of NADH, to form 3-keto-L-gulonate. The polypeptide is 2,3-diketo-L-gulonate reductase (Salmonella paratyphi C (strain RKS4594)).